We begin with the raw amino-acid sequence, 72 residues long: Putative membrane protein insertion efficiency factor (72 aa).

It belongs to the UPF0161 family.

It localises to the cell inner membrane. Could be involved in insertion of integral membrane proteins into the membrane. This is Putative membrane protein insertion efficiency factor from Amoebophilus asiaticus (strain 5a2).